The following is a 460-amino-acid chain: Monocarboxylate transporter 12 (460 aa).

Residues 1–10 lie on the Cytoplasmic side of the membrane; it reads MTQEKRSLHK. The next 12 helical transmembrane spans lie at 11 to 31, 58 to 78, 86 to 106, 115 to 135, 148 to 168, 177 to 197, 246 to 266, 282 to 302, 329 to 349, 354 to 374, 376 to 396, and 406 to 426; these read TPPDGGWGWMIVIGCFFVTVC, AWIHSIVDCSTMLCAPIGSYV, VGIILGGVLASTGLVLSSFAT, LGVLTGLGFALCYSPAIAMVG, IAMSGSGIGTFILAPVVQLLI, LLILGGFVSNLCVCGALMRPI, FIILAVSFLFLAYGCSPPFVY, AFLMSILGIVDIVGNITFGWV, FLPILTCFQLLVPFSVMFGYF, VALIPVITGDVVGTSNLSSAL, VVFFLHAVPYLLSPPIAGWLV, and FLLSGFSMIFCSILLGLAKII. The Cytoplasmic portion of the chain corresponds to 427–460; it reads NRIKKNPQATVVRSSDIKQEVWTNGDVSCLNAIS.

It belongs to the major facilitator superfamily. Monocarboxylate porter (TC 2.A.1.13) family.

The protein localises to the cell membrane. The protein resides in the basolateral cell membrane. It catalyses the reaction creatine(in) = creatine(out). It carries out the reaction guanidinoacetate(in) = guanidinoacetate(out). In terms of biological role, functions as a transporter for creatine and as well for its precursor guanidinoacetate. Transport of creatine and GAA is independent of resting membrane potential and extracellular Na(+), Cl(-), or pH. Contributes to the process of creatine biosynthesis and distribution. The polypeptide is Monocarboxylate transporter 12 (slc16a12) (Xenopus laevis (African clawed frog)).